We begin with the raw amino-acid sequence, 354 residues long: Rhodopsin (354 aa).

The Extracellular portion of the chain corresponds to 1–36; it reads MNGTEGPYFYIPMVNTTGIVRSPYDYPQYYLVNPAA. Asn2 and Asn15 each carry an N-linked (GlcNAc...) asparagine glycan. Residues 37 to 61 traverse the membrane as a helical segment; sequence YAALGAYMFFLILVGFPINFLTLYV. Residues 62-73 are Cytoplasmic-facing; the sequence is TIEHKKLRTPLN. Residues 74-96 form a helical membrane-spanning segment; the sequence is YILLNLAVANLFMVFGGFTTTMY. At 97-110 the chain is on the extracellular side; the sequence is TSMHGYFVLGRLGC. A disulfide bridge links Cys110 with Cys187. The chain crosses the membrane as a helical span at residues 111–133; that stretch reads NLEGFFATLGGEIALWSLVVLAV. The short motif at 134 to 136 is the 'Ionic lock' involved in activated form stabilization element; that stretch reads ERW. Over 134 to 152 the chain is Cytoplasmic; sequence ERWMVVCKPISNFRFGENH. A helical membrane pass occupies residues 153–173; the sequence is AIMGLAMTWLMASACAVPPLV. Residues 174-202 lie on the Extracellular side of the membrane; the sequence is GWSRYIPEGMQCSCGVDYYTRAEGFNNES. A glycan (N-linked (GlcNAc...) asparagine) is linked at Asn200. Residues 203–224 traverse the membrane as a helical segment; it reads FVVYMFCCHFMIPLIIVFFCYG. The Cytoplasmic portion of the chain corresponds to 225–252; that stretch reads RLLCAVKEAAAAQQESETTQRAEREVTR. Residues 253-274 traverse the membrane as a helical segment; sequence MVVIMVIAFLVCWLPYASVAWW. Residues 275–286 lie on the Extracellular side of the membrane; that stretch reads IFTHQGSEFGPV. The helical transmembrane segment at 287 to 308 threads the bilayer; that stretch reads FMTIPAFFAKSSSIYNPMIYIC. Lys296 is modified (N6-(retinylidene)lysine). At 309 to 354 the chain is on the cytoplasmic side; that stretch reads MNKQFRNCMITTLCCGKNPFEEEEGASSTASKTEASSVSSSSVSPA. 2 S-palmitoyl cysteine lipidation sites follow: Cys322 and Cys323. Residues 329-354 form a disordered region; that stretch reads EEEEGASSTASKTEASSVSSSSVSPA. Residues 334–354 are compositionally biased toward low complexity; sequence ASSTASKTEASSVSSSSVSPA.

This sequence belongs to the G-protein coupled receptor 1 family. Opsin subfamily. In terms of processing, phosphorylated on some or all of the serine and threonine residues present in the C-terminal region. Contains one covalently linked retinal chromophore.

The protein resides in the membrane. It localises to the cell projection. Its subcellular location is the cilium. It is found in the photoreceptor outer segment. In terms of biological role, photoreceptor required for image-forming vision at low light intensity. While most salt water fish species use retinal as chromophore, most freshwater fish use 3-dehydroretinal, or a mixture of retinal and 3-dehydroretinal. Light-induced isomerization of 11-cis to all-trans retinal triggers a conformational change that activates signaling via G-proteins. Subsequent receptor phosphorylation mediates displacement of the bound G-protein alpha subunit by arrestin and terminates signaling. The protein is Rhodopsin (rho) of Mullus surmuletus (Striped red mullet).